The following is a 766-amino-acid chain: Phosphoribosylformylglycinamidine synthase subunit PurL (766 aa).

Residue H46 is part of the active site. Y49 and K88 together coordinate ATP. E90 is a binding site for Mg(2+). Residues 91 to 94 (SHNH) and R113 contribute to the substrate site. H92 (proton acceptor) is an active-site residue. Residue D114 participates in Mg(2+) binding. Q237 is a substrate binding site. D265 is a binding site for Mg(2+). 309 to 311 (ESQ) is a binding site for substrate. Positions 520 and 557 each coordinate ATP. N558 is a binding site for Mg(2+). S560 contributes to the substrate binding site.

This sequence belongs to the FGAMS family. As to quaternary structure, monomer. Part of the FGAM synthase complex composed of 1 PurL, 1 PurQ and 2 PurS subunits.

It localises to the cytoplasm. It carries out the reaction N(2)-formyl-N(1)-(5-phospho-beta-D-ribosyl)glycinamide + L-glutamine + ATP + H2O = 2-formamido-N(1)-(5-O-phospho-beta-D-ribosyl)acetamidine + L-glutamate + ADP + phosphate + H(+). It functions in the pathway purine metabolism; IMP biosynthesis via de novo pathway; 5-amino-1-(5-phospho-D-ribosyl)imidazole from N(2)-formyl-N(1)-(5-phospho-D-ribosyl)glycinamide: step 1/2. Its function is as follows. Part of the phosphoribosylformylglycinamidine synthase complex involved in the purines biosynthetic pathway. Catalyzes the ATP-dependent conversion of formylglycinamide ribonucleotide (FGAR) and glutamine to yield formylglycinamidine ribonucleotide (FGAM) and glutamate. The FGAM synthase complex is composed of three subunits. PurQ produces an ammonia molecule by converting glutamine to glutamate. PurL transfers the ammonia molecule to FGAR to form FGAM in an ATP-dependent manner. PurS interacts with PurQ and PurL and is thought to assist in the transfer of the ammonia molecule from PurQ to PurL. This Synechococcus sp. (strain JA-3-3Ab) (Cyanobacteria bacterium Yellowstone A-Prime) protein is Phosphoribosylformylglycinamidine synthase subunit PurL.